A 202-amino-acid chain; its full sequence is 3-isopropylmalate dehydratase small subunit 2 (202 aa).

It belongs to the LeuD family. LeuD type 1 subfamily. In terms of assembly, heterodimer of LeuC and LeuD.

The enzyme catalyses (2R,3S)-3-isopropylmalate = (2S)-2-isopropylmalate. Its pathway is amino-acid biosynthesis; L-leucine biosynthesis; L-leucine from 3-methyl-2-oxobutanoate: step 2/4. Catalyzes the isomerization between 2-isopropylmalate and 3-isopropylmalate, via the formation of 2-isopropylmaleate. This chain is 3-isopropylmalate dehydratase small subunit 2, found in Bordetella parapertussis (strain 12822 / ATCC BAA-587 / NCTC 13253).